The chain runs to 638 residues: Actin-regulating kinase 1 (638 aa).

A Protein kinase domain is found at 22 to 298; the sequence is VEIIKYLTSG…VYQLLKRISI (277 aa). Residues 28 to 36 and Lys-56 contribute to the ATP site; that span reads LTSGGFAQV. The active-site Proton acceptor is the Asp-159. The residue at position 478 (Ser-478) is a Phosphoserine. Positions 482 to 515 are enriched in polar residues; it reads YSTRGNIKKNQSVKESLTSSSLPGTSFTPTSTKV. Residues 482–518 form a disordered region; it reads YSTRGNIKKNQSVKESLTSSSLPGTSFTPTSTKVNLK. 2 positions are modified to phosphoserine: Ser-522 and Ser-535. The tract at residues 569–638 is disordered; it reads SEESFNARKM…LAGRKLSLDK (70 aa). Basic and acidic residues predominate over residues 582–593; sequence KLHEKGEIDKPT. An interaction with SH3 domain of ABP1 region spans residues 602 to 615; it reads SKDKKTKPTPPPKP.

The protein belongs to the protein kinase superfamily. Ser/Thr protein kinase family. In terms of assembly, interacts with ABP1, which is required for proper actin patch localization.

It is found in the cytoplasm. It localises to the cytoskeleton. The protein localises to the actin patch. It catalyses the reaction L-seryl-[protein] + ATP = O-phospho-L-seryl-[protein] + ADP + H(+). It carries out the reaction L-threonyl-[protein] + ATP = O-phospho-L-threonyl-[protein] + ADP + H(+). Its function is as follows. Involved in regulation of actin cytoskeleton organization and endocytosis. The sequence is that of Actin-regulating kinase 1 (ARK1) from Saccharomyces cerevisiae (strain ATCC 204508 / S288c) (Baker's yeast).